Reading from the N-terminus, the 383-residue chain is Succinyl-diaminopimelate desuccinylase (383 aa).

Residue histidine 79 coordinates Zn(2+). The active site involves aspartate 81. Aspartate 110 is a binding site for Zn(2+). Glutamate 141 serves as the catalytic Proton acceptor. Residues glutamate 142, glutamate 170, and histidine 355 each contribute to the Zn(2+) site.

This sequence belongs to the peptidase M20A family. DapE subfamily. Homodimer. It depends on Zn(2+) as a cofactor. Requires Co(2+) as cofactor.

It carries out the reaction N-succinyl-(2S,6S)-2,6-diaminopimelate + H2O = (2S,6S)-2,6-diaminopimelate + succinate. It functions in the pathway amino-acid biosynthesis; L-lysine biosynthesis via DAP pathway; LL-2,6-diaminopimelate from (S)-tetrahydrodipicolinate (succinylase route): step 3/3. Catalyzes the hydrolysis of N-succinyl-L,L-diaminopimelic acid (SDAP), forming succinate and LL-2,6-diaminopimelate (DAP), an intermediate involved in the bacterial biosynthesis of lysine and meso-diaminopimelic acid, an essential component of bacterial cell walls. This is Succinyl-diaminopimelate desuccinylase from Helicobacter pylori (strain P12).